Consider the following 493-residue polypeptide: Activin receptor type-1C (493 aa).

A signal peptide spans 1-25 (MTPARRSALSLALLLVALASDLAAG). The Extracellular segment spans residues 26–113 (LKCVCLLCDS…PDAPRLGPTE (88 aa)). A helical membrane pass occupies residues 114-134 (LTVVITVPVCLLSIAAMLTIW). Topologically, residues 135–493 (ACQDRQCTYR…QLCVKEDCKA (359 aa)) are cytoplasmic. In terms of domain architecture, GS spans 165 to 194 (KTLKDLIYDATASGSGSGPPLLVQRTIART). The 291-residue stretch at 195–485 (IVLQEIVGKG…LRVKKTISQL (291 aa)) folds into the Protein kinase domain. ATP is bound by residues 201–209 (VGKGRFGEV) and Lys222. The Proton acceptor role is filled by Asp323.

Belongs to the protein kinase superfamily. TKL Ser/Thr protein kinase family. TGFB receptor subfamily. In terms of assembly, binds the type 2 receptor protein ACVR2A. Requires Mg(2+) as cofactor. It depends on Mn(2+) as a cofactor. In terms of tissue distribution, expressed in brain, kidney, lung, liver, testis, ovary, adrenal gland, heart, prostate, gastrointestinal tract, and spleen. Distributed throughout both adult and embryonic central nervous system and pancreatic islet cells.

It localises to the membrane. It carries out the reaction L-threonyl-[receptor-protein] + ATP = O-phospho-L-threonyl-[receptor-protein] + ADP + H(+). The enzyme catalyses L-seryl-[receptor-protein] + ATP = O-phospho-L-seryl-[receptor-protein] + ADP + H(+). Serine/threonine protein kinase which forms a receptor complex on ligand binding. The receptor complex consists of 2 type II and 2 type I transmembrane serine/threonine kinases. Type II receptors phosphorylate and activate type I receptors which autophosphorylate, then bind and activate SMAD transcriptional regulators, SMAD2 and SMAD3. Receptor for activin AB, activin B, activin E and NODAL. Upon NODAL binding, activation results in increased apoptosis and reduced proliferation through suppression of AKT signaling and the activation of Smad2-dependent signaling pathway in pancreatic beta-cells, trophoblasts, epithelial or neuronal cells. Acts as a positive regulator for macrophage activation partially through down-regulation of PPARG expression. This is Activin receptor type-1C from Rattus norvegicus (Rat).